The sequence spans 200 residues: Dephospho-CoA kinase (200 aa).

Positions 4 to 200 (VIGLTGGIAS…VILKNWNIID (197 aa)) constitute a DPCK domain. Position 12–17 (12–17 (ASGKST)) interacts with ATP.

Belongs to the CoaE family.

It localises to the cytoplasm. It carries out the reaction 3'-dephospho-CoA + ATP = ADP + CoA + H(+). It participates in cofactor biosynthesis; coenzyme A biosynthesis; CoA from (R)-pantothenate: step 5/5. Functionally, catalyzes the phosphorylation of the 3'-hydroxyl group of dephosphocoenzyme A to form coenzyme A. This chain is Dephospho-CoA kinase, found in Bacillus cereus (strain ATCC 10987 / NRS 248).